A 104-amino-acid chain; its full sequence is Ig lambda-2 chain C region (104 aa).

Positions Pro-6–Ser-99 constitute an Ig-like domain. Cys-27 and Cys-85 are joined by a disulfide.

In Mus musculus (Mouse), this protein is Ig lambda-2 chain C region (Iglc2).